The sequence spans 323 residues: 4-hydroxyphenylpyruvate 3-dimethylallyltransferase (323 aa).

The substrate site is built by Arg160 and Glu281.

Belongs to the aromatic prenyltransferase family. Monomer.

The protein resides in the cytoplasm. It carries out the reaction 3-(4-hydroxyphenyl)pyruvate + dimethylallyl diphosphate = 3-dimethylallyl-4-hydroxyphenylpyruvate + diphosphate. It functions in the pathway antibiotic biosynthesis; novobiocin biosynthesis. Functionally, magnesium-independent aromatic prenyltransferase that catalyzes the irreversible transfer of a dimethylallyl group to 4-hydroxyphenylpyruvate to produce the ring A structure in the novobiocin biosynthesis pathway. Novobiocin is an aminocoumarin family antibiotic that targets bacterial DNA gyrases. It is able to prenylate many different compounds, including the phenylpropanoids 4-coumarate and caffeate, the plant polyketide resveratrol, the (iso)flavonoid naringenin, apigenin, daidzein and genistein, and the dihydroxynaphthalenes 1,6-DHN and 2,7-DHN. This is 4-hydroxyphenylpyruvate 3-dimethylallyltransferase from Streptomyces niveus (Streptomyces spheroides).